Here is a 317-residue protein sequence, read N- to C-terminus: Methionyl-tRNA formyltransferase (317 aa).

109 to 112 (SLLP) is a binding site for (6S)-5,6,7,8-tetrahydrofolate.

Belongs to the Fmt family.

The enzyme catalyses L-methionyl-tRNA(fMet) + (6R)-10-formyltetrahydrofolate = N-formyl-L-methionyl-tRNA(fMet) + (6S)-5,6,7,8-tetrahydrofolate + H(+). Its function is as follows. Attaches a formyl group to the free amino group of methionyl-tRNA(fMet). The formyl group appears to play a dual role in the initiator identity of N-formylmethionyl-tRNA by promoting its recognition by IF2 and preventing the misappropriation of this tRNA by the elongation apparatus. The polypeptide is Methionyl-tRNA formyltransferase (Desulforamulus reducens (strain ATCC BAA-1160 / DSM 100696 / MI-1) (Desulfotomaculum reducens)).